The sequence spans 437 residues: Adenylosuccinate synthetase (437 aa).

Residues 12-18 (GDEGKGK) and 40-42 (GHT) each bind GTP. The active-site Proton acceptor is the aspartate 13. The Mg(2+) site is built by aspartate 13 and glycine 40. Residues 13 to 16 (DEGK), 38 to 41 (NAGH), threonine 128, arginine 142, glutamine 223, threonine 238, and arginine 302 each bind IMP. Histidine 41 functions as the Proton donor in the catalytic mechanism. 298–304 (TTTGRRR) serves as a coordination point for substrate. GTP contacts are provided by residues arginine 304, 330 to 332 (KLD), and 412 to 414 (SLG).

The protein belongs to the adenylosuccinate synthetase family. Homodimer. Mg(2+) serves as cofactor.

The protein localises to the cytoplasm. It carries out the reaction IMP + L-aspartate + GTP = N(6)-(1,2-dicarboxyethyl)-AMP + GDP + phosphate + 2 H(+). It functions in the pathway purine metabolism; AMP biosynthesis via de novo pathway; AMP from IMP: step 1/2. Plays an important role in the de novo pathway of purine nucleotide biosynthesis. Catalyzes the first committed step in the biosynthesis of AMP from IMP. This chain is Adenylosuccinate synthetase, found in Prochlorococcus marinus (strain MIT 9313).